The primary structure comprises 150 residues: uncharacterized protein (150 aa).

The signal sequence occupies residues 1 to 23 (MYSILIACLVLLLCLIIYVGHRA).

Belongs to the asfivirus EP152R family.

It localises to the virion. This is an uncharacterized protein from African swine fever virus (isolate Warthog/Namibia/Wart80/1980) (ASFV).